We begin with the raw amino-acid sequence, 465 residues long: ATP synthase subunit beta (465 aa).

ATP is bound at residue 148–155 (GGAGVGKT).

This sequence belongs to the ATPase alpha/beta chains family. As to quaternary structure, F-type ATPases have 2 components, CF(1) - the catalytic core - and CF(0) - the membrane proton channel. CF(1) has five subunits: alpha(3), beta(3), gamma(1), delta(1), epsilon(1). CF(0) has three main subunits: a(1), b(2) and c(9-12). The alpha and beta chains form an alternating ring which encloses part of the gamma chain. CF(1) is attached to CF(0) by a central stalk formed by the gamma and epsilon chains, while a peripheral stalk is formed by the delta and b chains.

It is found in the cell inner membrane. It catalyses the reaction ATP + H2O + 4 H(+)(in) = ADP + phosphate + 5 H(+)(out). Its function is as follows. Produces ATP from ADP in the presence of a proton gradient across the membrane. The catalytic sites are hosted primarily by the beta subunits. This is ATP synthase subunit beta from Neisseria meningitidis serogroup C (strain 053442).